We begin with the raw amino-acid sequence, 702 residues long: SAGA complex subunit NGG1 (702 aa).

Basic residues predominate over residues 1–10 (MPRHGRRGKL). Disordered regions lie at residues 1 to 29 (MPRH…PSKL) and 90 to 224 (LRKI…VKNP). 2 stretches are compositionally biased toward basic and acidic residues: residues 11-22 (PKGEKLPKKEGG) and 90-108 (LRKI…EKQE). The span at 109-125 (TSNADGQHESSTATEET) shows a compositional bias: polar residues. The residue at position 134 (Ser-134) is a Phosphoserine. Basic and acidic residues predominate over residues 162–219 (MAKEEINEDKDLQVHRDQPREKRPFDSETENRATENENTQRPDNKKQKIDVDKMENDP). Ser-407 bears the Phosphoserine mark. Thr-464 carries the phosphothreonine modification. A Nuclear localization signal motif is present at residues 606–618 (KRIRVPKKRKKHH). Disordered stretches follow at residues 611–636 (PKKR…IAQQ) and 672–702 (NESV…VELN). Residues 620-636 (AASNNVNTGTTSQIAQQ) show a composition bias toward polar residues. Positions 680-689 (DQEEDEDEAD) are enriched in acidic residues.

This sequence belongs to the NGG1 family. As to quaternary structure, component of the 1.8 MDa SAGA (Spt-Ada-Gcn5 acetyltransferase) complex, which is composed of 19 subunits TRA1, SPT7, TAF5, NGG1/ADA3, SGF73, SPT20/ADA5, SPT8, TAF12, TAF6, HFI1/ADA1, UBP8, GCN5, ADA2, SPT3, SGF29, TAF10, TAF9, SGF11 and SUS1. The SAGA complex is composed of 4 modules, namely the HAT (histone acetyltransferase) module (GCN5, ADA2, NGG1/ADA3 and SGF29), the DUB (deubiquitinating) module (UBP8, SGF11, SGF73 and SUS1), the core or TAF (TBP-associated factor) module (TAF5, TAF6, TAF9, TAF10 and TAF12), and the Tra1 or SPT (Suppressor of Ty) module (TRA1, HFI1/ADA1, SPT3, SPT7, SPT8 and SPT20/ADA5). The Tra1/SPT module binds activators, the core module recruits TBP (TATA-binding protein), the HAT module contains the histone H3 acetyltransferase GCN5, and the DUB module comprises the histone H2B deubiquitinase UBP8. Also identified in an altered form of SAGA, named SALSA (SAGA altered, Spt8 absent) or SLIK (SAGA-like) complex, which contains a C-terminal truncated form of SPT7 and is missing SPT8. However, it has been shown that the SAGA and SAGA-like SALSA/SLIK transcriptional coactivators are structurally and biochemically equivalent. Component of the 0.8 MDa ADA complex, a HAT complex distinct from SAGA, which at least consists of ADA2, NGG1/ADA3, AHC1, AHC2, SGF29 and GCN5. Identified in an Ada.spt complex with SPT7 and TRA1. Component of an ADA/GCN5 complex that consists of HFI1/ADA1, ADA2, NGG1/ADA3, SPT20/ADA5 and GCN5 and probably is a subcomplex of SAGA.

It is found in the nucleus. In terms of biological role, component of the transcription coactivator SAGA complex. SAGA acts as a general cofactor required for essentially all RNA polymerase II transcription. At the promoters, SAGA is required for transcription pre-initiation complex (PIC) recruitment. It influences RNA polymerase II transcriptional activity through different activities such as TBP interaction (via core/TAF module) and promoter selectivity, interaction with transcription activators (via Tra1/SPT module), and chromatin modification through histone acetylation (via HAT module) and deubiquitination (via DUB module). SAGA preferentially acetylates histones H3 (to form H3K9ac, H3K14ac, H3K18ac and H3K23ac) and H2B and deubiquitinates histone H2B. SAGA interacts with DNA via upstream activating sequences (UASs). Also identified in a modified version of SAGA named SALSA or SLIK. The cleavage of SPT7 and the absence of the SPT8 subunit in SLIK neither drive any major conformational differences in its structure compared with SAGA, nor significantly affect HAT, DUB, or DNA-binding activities. Component of the ADA histone acetyltransferase complex, which preferentially acetylates nucleosomal histones H3 (to form H3K14ac and H3K18ac) and H2B. May be involved in response to DNA damage by genotoxic agents. The polypeptide is SAGA complex subunit NGG1 (NGG1) (Saccharomyces cerevisiae (strain ATCC 204508 / S288c) (Baker's yeast)).